We begin with the raw amino-acid sequence, 447 residues long: MKDLISIIDVKDHVGETVKIGAWVADKSGKGKLQFLQLRDGTAFFQAVVFKPNMIEKFGEEEGTAKFDEIKHLSQETSVYVTGVVKEDSRSKFGYELDVTELEVIGHSHDYPITPKEHGVEFLLDNRHLWLRSKRQMAMMQVRNAIIYASYDFFAKNGFIKFDSPILSGNAAENTTELFETDYFGNPAFLSQSGQLYLEAGAMALGRVFDFGPVFRAEKSKTRRHLTEFWMMDAEYPFVTHDESLDIQEAYVKALIQGVLDNAAYALETLERDTSMLQKYIDTPFKRVSYDDAIDLLQAHENDEDTDYEHVEHGDDFGSPHETWISNYYGVPTFIVNYPASFKAFYMKPVPGNPERVLCADLLAPEGYGEIIGGSERETDYDLLLKKIADFGLDPKDYDWYLELRKFGSVPHAGFGLGLERMVTFVAGTEHIREAIPFPRMINRIQP.

This sequence belongs to the class-II aminoacyl-tRNA synthetase family. Homodimer.

It localises to the cytoplasm. The catalysed reaction is tRNA(Asn) + L-asparagine + ATP = L-asparaginyl-tRNA(Asn) + AMP + diphosphate + H(+). This Lactococcus lactis subsp. cremoris (strain MG1363) protein is Asparagine--tRNA ligase.